The primary structure comprises 546 residues: Choline/ethanolamine transporter FLVCR2 (546 aa).

Positions 1–84 (MVNESLNQEE…TLAQPSGLTH (84 aa)) are disordered. Over 1–93 (MVNESLNQEE…HPNELVKEDS (93 aa)) the chain is Cytoplasmic. Residues 22-49 (QADTSYSTQPSVSIHPSVSGHPSVSIHP) are compositionally biased toward polar residues. 7 consecutive repeat copies span residues 31–36 (PSVSIH), 37–42 (PSVSGH), 43–48 (PSVSIH), 49–54 (PSVSGH), 55–60 (PSVSID), 61–66 (PSVSVH), and 67–72 (PSSSAH). The interval 31 to 84 (PSVSIHPSVSGHPSVSIHPSVSGHPSVSIDPSVSVHPSSSAHPSTLAQPSGLTH) is 9 X 6 AA tandem repeats of P-S-[VS]-S-[VIAG]-[HD]. Residues 54 to 74 (HPSVSIDPSVSVHPSSSAHPS) show a composition bias toward low complexity. The stretch at 73-78 (PSTLAQ) is one 8; approximate repeat. A 9; approximate repeat occupies 79 to 84 (PSGLTH). Residues 94–118 (VIKVSKRRWAVVLVFSCYSLCNAFQ) form a helical membrane-spanning segment. Positions 115, 116, and 119 each coordinate choline. Topologically, residues 119 to 136 (WIQYGSINNIFMNFYGVS) are extracellular. Residues 137–164 (AFAIDWLSMCYMLTYIPLLLPVAWMLEK) form a helical membrane-spanning segment. The Cytoplasmic segment spans residues 165–166 (FG). A helical membrane pass occupies residues 167–186 (LRTIAITGSALNCLGAWVKL). Over 187–193 (GSLEPHL) the chain is Extracellular. A helical membrane pass occupies residues 194–222 (FPVTMVGQVICSVAQVFILGMPSRIASVW). Leucine 212 contributes to the choline binding site. Topologically, residues 223 to 227 (FGANE) are cytoplasmic. A helical membrane pass occupies residues 228–253 (VSTACSMAVFGNQLGIAIGFLVPPVL). The Extracellular segment spans residues 254-258 (VPNIK). A helical transmembrane segment spans residues 259-288 (DQEKLAYHISIMFYIIGGVATLLFILVIIV). The Cytoplasmic segment spans residues 289 to 324 (FKEKPKYPPSRAQSLSYALATTDASYLSSIVRLFKN). Residues 325–355 (LNFVLLVITYGLNAGAFYALSTLLNRMVIMH) traverse the membrane as a helical segment. Residue tyrosine 342 coordinates choline. The Extracellular portion of the chain corresponds to 356–359 (FPGQ). A helical membrane pass occupies residues 360 to 388 (EVNAGRIGLTIVIAGMFGAMISGIWLDKS). Residues 389–390 (KT) lie on the Cytoplasmic side of the membrane. The helical transmembrane segment at 391–413 (YKETTLVVYIMTLVGMVVYTFTL) threads the bilayer. Topologically, residues 414–416 (NLN) are extracellular. A helical transmembrane segment spans residues 417–446 (HLWIVFITADSLGFFMTGYLPLGFEFAVEL). The Cytoplasmic portion of the chain corresponds to 447 to 454 (TYPESEGV). The helical transmembrane segment at 455–480 (SSGLLNVSAQVFGIIFTISQGQIIDN) threads the bilayer. Glutamine 464 provides a ligand contact to choline. The Extracellular portion of the chain corresponds to 481 to 482 (YG). Residues 483-505 (SVPGNIFLCVFLALGSALTAFIK) traverse the membrane as a helical segment. Residues 506-546 (SDLRRQRANKDAPETKVQEEEEEEEESNTSKVPTVLSEAHL) lie on the Cytoplasmic side of the membrane. The segment covering 511–523 (QRANKDAPETKVQ) has biased composition (basic and acidic residues). A disordered region spans residues 511–546 (QRANKDAPETKVQEEEEEEEESNTSKVPTVLSEAHL). Serine 535 carries the post-translational modification Phosphoserine.

The protein belongs to the major facilitator superfamily. Feline leukemia virus subgroup C receptor (TC 2.A.1.28.1) family. In terms of assembly, interacts with components of electron transfer chain complexes III, IV and V including CYC1, NDUFA4, COX4I1, ATP5PD and ATP5F1C; these interactions occur in the absence of heme and are disrupted upon heme binding. Interacts with ATP2A2; this interaction occurs in the absence of heme and promotes ATP2A2 proteasomal degradation; the complex is dissociated upon heme binding. Interacts with HMOX1; this interaction is potentiated in the presence of heme.

The protein resides in the cell membrane. The protein localises to the mitochondrion membrane. It is found in the endoplasmic reticulum membrane. The catalysed reaction is choline(out) = choline(in). It carries out the reaction ethanolamine(in) = ethanolamine(out). It catalyses the reaction heme b(in) = heme b(out). Its function is as follows. Choline uniporter that specifically mediates choline uptake at the blood-brain-barrier. Responsible for the majority of choline uptake across the blood-brain-barrier from the circulation into the brain. Choline, a nutrient critical for brain development, is a precursor of phosphatidylcholine, as well as betaine. Also mediates transport of ethanolamine. Choline and ethanolamine transport is not coupled with proton transport and is exclusively driven by the choline gradient across the plasma membrane. However, the presence of an inwardly directed proton gradient enhances choline uptake. Also acts as a heme b transporter. Required to regulate mitochondrial respiration processes, ATP synthesis and thermogenesis. At low heme levels, interacts with components of electron transfer chain (ETC) complexes and ATP2A2, leading to ubiquitin-mediated degradation of ATP2A2 and inhibition of thermogenesis. Upon heme binding, dissociates from ETC complexes to allow switching from mitochondrial ATP synthesis to thermogenesis. This Rattus norvegicus (Rat) protein is Choline/ethanolamine transporter FLVCR2 (Flvcr2).